Reading from the N-terminus, the 177-residue chain is FMRFamide-related peptides (177 aa).

An N-terminal signal peptide occupies residues Met-1–Ser-21. Residues Thr-22–Ala-32 constitute a propeptide that is removed on maturation. Phenylalanine amide is present on Phe-45. A propeptide spanning residues Arg-47–Ser-93 is cleaved from the precursor. Phenylalanine amide occurs at positions 102 and 111. The propeptide occupies Arg-113 to Gln-131. Leu-143 bears the Leucine amide mark. Residues Arg-145–Ala-177 constitute a propeptide that is removed on maturation. The interval Arg-145–Ala-177 is disordered. The segment covering Leu-149–Tyr-158 has biased composition (acidic residues). The span at Glu-159 to Val-169 shows a compositional bias: basic and acidic residues.

This sequence belongs to the FARP (FMRFamide related peptide) family. Only expressed in the CNS and predominantly in the thoracic ganglia. Strongest expression is seen in two pairs of large neurons in each thoracic ganglion. These neurons are ventrolateral neurosecretory cells 1 and 2, they project their axons through transverse nerves into the periphery where axons from the prothoracic ganglion innervate the prothoracic gland.

The protein resides in the secreted. Its function is as follows. Regulates ecdysteroidogenesis by direct innervation of the prothoracic gland by reducing cAMP production via the receptor for myosuppressin. The neurons that innervate the prothoracic gland during the fifth instar are most active during days 0-4, after which they reduce and then peak again on day 6. Expression suppresses the biosynthesis of steroid hormones called ecdysteroids that elicit molting and metamorphosis. This Bombyx mori (Silk moth) protein is FMRFamide-related peptides.